The primary structure comprises 316 residues: Mannose-6-phosphate isomerase (316 aa).

Residues Q95, H97, E114, and H171 each contribute to the Zn(2+) site. R191 is an active-site residue.

This sequence belongs to the mannose-6-phosphate isomerase type 1 family. Zn(2+) serves as cofactor.

It carries out the reaction D-mannose 6-phosphate = D-fructose 6-phosphate. This is Mannose-6-phosphate isomerase (pmi) from Streptococcus mutans serotype c (strain ATCC 700610 / UA159).